The following is a 917-amino-acid chain: Sensor histidine kinase GacS (917 aa).

Helical transmembrane passes span 11–31 (VLLL…GYFT) and 168–188 (SLFA…LLAV). Positions 192–244 (RTINNPLTQIKQAVAQLKDGNLETRLPPLGSQELDELASGINRMASTLQNAQE) constitute an HAMP domain. The 222-residue stretch at 291–512 (NMSHEIRTPL…EFWISLNLPK (222 aa)) folds into the Histidine kinase domain. H294 bears the Phosphohistidine; by autocatalysis mark. The 120-residue stretch at 668-787 (RVLCVDDNPA…QLAQVVLKWT (120 aa)) folds into the Response regulatory domain. The residue at position 717 (D717) is a 4-aspartylphosphate. One can recognise an HPt domain in the interval 824 to 917 (KADLAADMLA…RLAAEARTNA (94 aa)). At H863 the chain carries Phosphohistidine.

In terms of processing, activation requires a sequential transfer of a phosphate group from a His in the primary transmitter domain, to an Asp in the receiver domain and to a His in the secondary transmitter domain.

The protein resides in the cell inner membrane. The enzyme catalyses ATP + protein L-histidine = ADP + protein N-phospho-L-histidine.. Functionally, member of the two-component regulatory system GacA/GacS which controls the expression of secondary metabolites and extracellular products. Activates GacA by phosphorylation. GacA acts (probably primarily) by activating expression of CsrA1 and CsrA2 antagonist small RNAs (sRNA) RsmX, RsmY and RsmZ which bind to and prevent translation repression by CsrA1 and CsrA2. Involved in the regulation of secondary metabolism and in the synthesis of the antifungal factors cyanide, 2,4-diacetylphloroglucinol and pyoluteorin. Exercises positive post-transcriptional control over the hcnABC and aprA genes; acts upstream of CsrA2 (rsmA). Controls expression of CsrA1 and CsrA2 antagonist sRNAs RsmX, RsmY and probably RsmZ. Probably controls expression of csrA1 (rsmE) and csrA2. This is Sensor histidine kinase GacS (gacS) from Pseudomonas protegens (strain DSM 19095 / LMG 27888 / CFBP 6595 / CHA0).